The chain runs to 1221 residues: A disintegrin and metalloproteinase with thrombospondin motifs 18 (1221 aa).

A signal peptide spans 1-47; that stretch reads MECALLLACAFPAAGSGPPRGLAGLGRVAKALQLCCLCCASVAAALA. A propeptide spanning residues 48–284 is cleaved from the precursor; it reads SDSSSGASGL…EYGSSGRPRR (237 aa). N-linked (GlcNAc...) asparagine glycans are attached at residues asparagine 151 and asparagine 190. The Cysteine switch motif lies at 252–259; it reads HFCGRRKK. Cysteine 254 serves as a coordination point for Zn(2+). The segment at 258–291 is disordered; it reads KKYAPKPPTEDTYLRFDEYGSSGRPRRSAGKSQK. Basic and acidic residues predominate over residues 265-275; that stretch reads PTEDTYLRFDE. The 206-residue stretch at 293-498 folds into the Peptidase M12B domain; it reads LNVETLVVAD…PQAGCLVDEP (206 aa). Residue asparagine 313 is glycosylated (N-linked (GlcNAc...) asparagine). 11 disulfide bridges follow: cysteine 369/cysteine 420, cysteine 395/cysteine 402, cysteine 414/cysteine 493, cysteine 453/cysteine 477, cysteine 521/cysteine 546, cysteine 532/cysteine 553, cysteine 541/cysteine 572, cysteine 566/cysteine 577, cysteine 601/cysteine 638, cysteine 605/cysteine 643, and cysteine 616/cysteine 628. Histidine 436 contributes to the Zn(2+) binding site. The active site involves glutamate 437. Residues histidine 440 and histidine 446 each contribute to the Zn(2+) site. The Disintegrin domain occupies 498–577; sequence PKQAGQYKYP…LSMWCRQGQC (80 aa). Residues 589–644 form the TSP type-1 1 domain; sequence HGQWSAWSKWSECSRTCGGGVKFQERHCNNPKPQYGGLFCPGSSRIYQLCNINPCN. Asparagine 745, asparagine 838, and asparagine 909 each carry an N-linked (GlcNAc...) asparagine glycan. The tract at residues 750 to 876 is spacer; that stretch reads FYKGLYLNQH…TPPATKRPAY (127 aa). TSP type-1 domains are found at residues 931-990, 991-1049, 1052-1116, and 1123-1178; these read CPAY…NSHA, CPPQ…GRCP, SRLQ…RACP, and MVAG…NFCP. A PLAC domain is found at 1184 to 1221; it reads EDPSCVDFFNWCHLVPQHGVCNHKFYGKQCCKSCTRKI.

Requires Zn(2+) as cofactor. Post-translationally, the precursor is cleaved by a furin endopeptidase. Glycosylated. Can be O-fucosylated by POFUT2 on a serine or a threonine residue found within the consensus sequence C1-X(2)-(S/T)-C2-G of the TSP type-1 repeat domains where C1 and C2 are the first and second cysteine residue of the repeat, respectively. Fucosylated repeats can then be further glycosylated by the addition of a beta-1,3-glucose residue by the glucosyltransferase, B3GALTL. Fucosylation mediates the efficient secretion of ADAMTS family members. Can also be C-glycosylated with one or two mannose molecules on tryptophan residues within the consensus sequence W-X-X-W of the TPRs, and N-glycosylated. These other glycosylations can also facilitate secretion. Expressed in fetal lung, liver, and kidney and in adult brain, prostate, submaxillary gland, and endothelium.

The protein localises to the secreted. Its subcellular location is the extracellular space. The protein resides in the extracellular matrix. This chain is A disintegrin and metalloproteinase with thrombospondin motifs 18 (ADAMTS18), found in Homo sapiens (Human).